The sequence spans 339 residues: Dihydroorotate dehydrogenase (quinone) (339 aa).

FMN is bound by residues 62-66 (AGLDK) and Thr86. Lys66 is a binding site for substrate. 111–115 (NRMGF) is a binding site for substrate. 2 residues coordinate FMN: Asn139 and Asn172. Substrate is bound at residue Asn172. Ser175 serves as the catalytic Nucleophile. A substrate-binding site is contributed by Asn177. FMN is bound by residues Lys217 and Thr245. 246 to 247 (NT) is a substrate binding site. Residues Gly268, Gly297, and 318 to 319 (YS) each bind FMN.

Belongs to the dihydroorotate dehydrogenase family. Type 2 subfamily. In terms of assembly, monomer. FMN is required as a cofactor.

The protein resides in the cell membrane. It carries out the reaction (S)-dihydroorotate + a quinone = orotate + a quinol. It participates in pyrimidine metabolism; UMP biosynthesis via de novo pathway; orotate from (S)-dihydroorotate (quinone route): step 1/1. Its function is as follows. Catalyzes the conversion of dihydroorotate to orotate with quinone as electron acceptor. The sequence is that of Dihydroorotate dehydrogenase (quinone) from Shewanella amazonensis (strain ATCC BAA-1098 / SB2B).